The primary structure comprises 371 residues: Chaperone protein DnaJ (371 aa).

Positions 5-69 constitute a J domain; that stretch reads DYYEVLGLSK…QKRAQYDQFG (65 aa). The CR-type zinc-finger motif lies at 133–215; sequence GKELNVEIPV…CHGSGKVRKR (83 aa). Zn(2+) contacts are provided by Cys146, Cys149, Cys163, Cys166, Cys189, Cys192, Cys203, and Cys206. CXXCXGXG motif repeat units follow at residues 146–153, 163–170, 189–196, and 203–210; these read CDTCKGSG, CKHCSGSG, CSHCSGTG, and CTTCHGSG.

This sequence belongs to the DnaJ family. As to quaternary structure, homodimer. It depends on Zn(2+) as a cofactor.

Its subcellular location is the cytoplasm. Participates actively in the response to hyperosmotic and heat shock by preventing the aggregation of stress-denatured proteins and by disaggregating proteins, also in an autonomous, DnaK-independent fashion. Unfolded proteins bind initially to DnaJ; upon interaction with the DnaJ-bound protein, DnaK hydrolyzes its bound ATP, resulting in the formation of a stable complex. GrpE releases ADP from DnaK; ATP binding to DnaK triggers the release of the substrate protein, thus completing the reaction cycle. Several rounds of ATP-dependent interactions between DnaJ, DnaK and GrpE are required for fully efficient folding. Also involved, together with DnaK and GrpE, in the DNA replication of plasmids through activation of initiation proteins. This is Chaperone protein DnaJ from Bacillus cereus (strain AH820).